A 258-amino-acid chain; its full sequence is Type III pantothenate kinase (258 aa).

6–13 lines the ATP pocket; it reads DVGNTNTV. Substrate is bound by residues Tyr100 and 107–110; that span reads GADR. Asp109 serves as the catalytic Proton acceptor. Residue Asp129 coordinates K(+). Thr132 provides a ligand contact to ATP. Substrate is bound at residue Thr184.

Belongs to the type III pantothenate kinase family. As to quaternary structure, homodimer. Requires NH4(+) as cofactor. The cofactor is K(+).

Its subcellular location is the cytoplasm. It catalyses the reaction (R)-pantothenate + ATP = (R)-4'-phosphopantothenate + ADP + H(+). The protein operates within cofactor biosynthesis; coenzyme A biosynthesis; CoA from (R)-pantothenate: step 1/5. Its activity is regulated as follows. Not regulated by feedback inhibition by CoA and its thioesters as described for many other pantothenate kinases. Not inhibited by N-pentylpantothenamide (N5-Pan), and this compound cannot act as a substrate either. Its function is as follows. Catalyzes the phosphorylation of pantothenate (Pan), the first step in CoA biosynthesis. Cannot utilize a phosphoryl donor other than ATP. The polypeptide is Type III pantothenate kinase (coaX) (Bacillus subtilis (strain 168)).